Consider the following 215-residue polypeptide: Adenylate kinase (215 aa).

10-15 lines the ATP pocket; the sequence is GAGKGT. Positions 30–59 are NMP; it reads STGDILRENVKNETELGKKAKEYMDKGLLV. AMP contacts are provided by residues T31, R36, 57–59, 85–88, and Q92; these read LLV and GFPR. Positions 126-163 are LID; that stretch reads GRRICKNCGASFHVIYRPPQKEGVCDVCGGELYQREDD. R127 is a binding site for ATP. Zn(2+) is bound by residues C130 and C133. 136-137 lines the ATP pocket; that stretch reads SF. Residues C150 and C153 each contribute to the Zn(2+) site. The AMP site is built by R160 and R171. Q198 contributes to the ATP binding site.

Belongs to the adenylate kinase family. As to quaternary structure, monomer.

The protein resides in the cytoplasm. It carries out the reaction AMP + ATP = 2 ADP. Its pathway is purine metabolism; AMP biosynthesis via salvage pathway; AMP from ADP: step 1/1. Its function is as follows. Catalyzes the reversible transfer of the terminal phosphate group between ATP and AMP. Plays an important role in cellular energy homeostasis and in adenine nucleotide metabolism. The polypeptide is Adenylate kinase (Caldicellulosiruptor bescii (strain ATCC BAA-1888 / DSM 6725 / KCTC 15123 / Z-1320) (Anaerocellum thermophilum)).